A 372-amino-acid chain; its full sequence is 4-hydroxy-3-methylbut-2-en-1-yl diphosphate synthase (flavodoxin) (372 aa).

[4Fe-4S] cluster contacts are provided by cysteine 270, cysteine 273, cysteine 305, and glutamate 312.

Belongs to the IspG family. [4Fe-4S] cluster serves as cofactor.

It carries out the reaction (2E)-4-hydroxy-3-methylbut-2-enyl diphosphate + oxidized [flavodoxin] + H2O + 2 H(+) = 2-C-methyl-D-erythritol 2,4-cyclic diphosphate + reduced [flavodoxin]. It functions in the pathway isoprenoid biosynthesis; isopentenyl diphosphate biosynthesis via DXP pathway; isopentenyl diphosphate from 1-deoxy-D-xylulose 5-phosphate: step 5/6. Converts 2C-methyl-D-erythritol 2,4-cyclodiphosphate (ME-2,4cPP) into 1-hydroxy-2-methyl-2-(E)-butenyl 4-diphosphate. The sequence is that of 4-hydroxy-3-methylbut-2-en-1-yl diphosphate synthase (flavodoxin) from Aliivibrio fischeri (strain ATCC 700601 / ES114) (Vibrio fischeri).